The chain runs to 68 residues: uncharacterized protein (68 aa).

The HMA domain occupies 2–67 (KTITLNIKGI…VIEDAGFDAT (66 aa)). Positions 13 and 16 each coordinate a metal cation.

This is an uncharacterized protein from Haemophilus influenzae (strain ATCC 51907 / DSM 11121 / KW20 / Rd).